The following is a 59-amino-acid chain: UPF0339 protein CC_2965 (59 aa).

The protein belongs to the UPF0339 family.

The sequence is that of UPF0339 protein CC_2965 from Caulobacter vibrioides (strain ATCC 19089 / CIP 103742 / CB 15) (Caulobacter crescentus).